We begin with the raw amino-acid sequence, 130 residues long: Small ribosomal subunit protein uS8 (130 aa).

The protein belongs to the universal ribosomal protein uS8 family. In terms of assembly, part of the 30S ribosomal subunit.

In terms of biological role, one of the primary rRNA binding proteins, it binds directly to 16S rRNA central domain where it helps coordinate assembly of the platform of the 30S subunit. The sequence is that of Small ribosomal subunit protein uS8 from Cenarchaeum symbiosum (strain A).